The chain runs to 197 residues: Peptidyl-tRNA hydrolase (197 aa).

Tyrosine 21 is a tRNA binding site. Residue histidine 26 is the Proton acceptor of the active site. The tRNA site is built by tyrosine 72, asparagine 74, and asparagine 120.

It belongs to the PTH family. Monomer.

Its subcellular location is the cytoplasm. The enzyme catalyses an N-acyl-L-alpha-aminoacyl-tRNA + H2O = an N-acyl-L-amino acid + a tRNA + H(+). Hydrolyzes ribosome-free peptidyl-tRNAs (with 1 or more amino acids incorporated), which drop off the ribosome during protein synthesis, or as a result of ribosome stalling. Its function is as follows. Catalyzes the release of premature peptidyl moieties from peptidyl-tRNA molecules trapped in stalled 50S ribosomal subunits, and thus maintains levels of free tRNAs and 50S ribosomes. The protein is Peptidyl-tRNA hydrolase of Saccharophagus degradans (strain 2-40 / ATCC 43961 / DSM 17024).